Consider the following 189-residue polypeptide: Elongation factor P (189 aa).

Belongs to the elongation factor P family.

The protein localises to the cytoplasm. It participates in protein biosynthesis; polypeptide chain elongation. In terms of biological role, involved in peptide bond synthesis. Stimulates efficient translation and peptide-bond synthesis on native or reconstituted 70S ribosomes in vitro. Probably functions indirectly by altering the affinity of the ribosome for aminoacyl-tRNA, thus increasing their reactivity as acceptors for peptidyl transferase. This is Elongation factor P from Pseudomonas savastanoi pv. phaseolicola (strain 1448A / Race 6) (Pseudomonas syringae pv. phaseolicola (strain 1448A / Race 6)).